The following is a 309-amino-acid chain: uncharacterized protein (309 aa).

The region spanning 11 to 87 (QRLDTFLATL…FPLDILYEDE (77 aa)) is the S4 RNA-binding domain. D131 is an active-site residue.

Belongs to the pseudouridine synthase RluA family.

It catalyses the reaction a uridine in RNA = a pseudouridine in RNA. This is an uncharacterized protein from Mycoplasma pneumoniae (strain ATCC 29342 / M129 / Subtype 1) (Mycoplasmoides pneumoniae).